A 160-amino-acid chain; its full sequence is UPF0178 protein BB1267 (160 aa).

This sequence belongs to the UPF0178 family.

In Bordetella bronchiseptica (strain ATCC BAA-588 / NCTC 13252 / RB50) (Alcaligenes bronchisepticus), this protein is UPF0178 protein BB1267.